The chain runs to 79 residues: MLTKINKAIALVFVSLISFYQKWISPLFGPSCRFIPSCSAYGIEAVNKHGPWRGGWLTLKRLSKCHPFTPCGCDPVPEK.

Belongs to the UPF0161 family.

The protein resides in the cell inner membrane. In terms of biological role, could be involved in insertion of integral membrane proteins into the membrane. The polypeptide is Putative membrane protein insertion efficiency factor (Prochlorococcus marinus (strain NATL1A)).